The sequence spans 1106 residues: Inversin (1106 aa).

ANK repeat units lie at residues S13–D42, F47–R76, S80–K110, E113–T144, N148–I177, E181–L213, E220–S250, L254–S285, Q288–D317, E321–I350, Y356–A385, M389–L418, D422–V451, A455–I484, E488–H517, and E523–A553. The D-box 1 motif lies at R490–N498. Positions Q555 to K584 constitute an IQ 1 domain. Positions R589 to S607 are enriched in basic and acidic residues. Disordered regions lie at residues R589 to M615, L636 to S688, A746 to G782, and A809 to A833. 2 stretches are compositionally biased toward polar residues: residues L636–L645 and V653–G666. Residues K812–H822 show a composition bias toward basic residues. Residues R944–N952 carry the D-box 2 motif. The IQ 2 domain occupies K951–Q980.

Binds calmodulin via its IQ domains. Interacts with APC2.

It localises to the cytoplasm. The protein resides in the cytoskeleton. Functionally, required for normal renal development and establishment of left-right axis. Probably acts as a molecular switch between different Wnt signaling pathways. Inhibits the canonical Wnt pathway by targeting cytoplasmic disheveled for degradation by the ubiquitin-proteasome. This suggests that it is required in renal development to oppose the repression of terminal differentiation of tubular epithelial cells by Wnt signaling. This is Inversin (INVS) from Gallus gallus (Chicken).